Reading from the N-terminus, the 395-residue chain is Protein HIGH CHLOROPHYLL FLUORESCENCE PHENOTYPE 244, chloroplastic (395 aa).

The N-terminal 64 residues, 1-64 (MASLRLPAQL…ERSIVVPVTC (64 aa)), are a transit peptide targeting the chloroplast.

The protein belongs to the NmrA-type oxidoreductase family. In terms of assembly, component of a high molecular weight complex containing OHP1, OHP2 and HCF244, and PSII core proteins D1/D2, HCF136 and HCF173. Interacts with OHP1. Forms a trimeric complex with OHP1 and OHP2 that mutually stabilizes each subunit.

Its subcellular location is the plastid. The protein resides in the chloroplast stroma. The protein localises to the chloroplast thylakoid membrane. Functionally, auxiliary factor required, together with HCF173, for the biogenesis of photosystem II (PSII), especially for the synthesis of the reaction center proteins (e.g. D1), via the regulation of the corresponding mRNA (e.g. psbA) translation initiation (ribosomal loading) and stabilization. Forms a trimeric complex with OHP1 and OHP2 that is required to promote PSII core subunit assembly. The trimeric complex forms a transient PSII reaction center-like complex with PsbA, PsbD, PsbE, PsbF and PsbI subunits in thylakoids for early assembly of PSII as well as PSII repair. The trimeric complex is required for the recruitment of ribosomes to the psbA mRNA during PSII biogenesis and repair. This is Protein HIGH CHLOROPHYLL FLUORESCENCE PHENOTYPE 244, chloroplastic from Arabidopsis thaliana (Mouse-ear cress).